Here is a 586-residue protein sequence, read N- to C-terminus: Acyl-coenzyme A synthetase ACSM3, mitochondrial (586 aa).

A mitochondrion-targeting transit peptide spans 1–27 (MLACVTMKMLRHAKCFQRLAIFGSVRA). 2 positions are modified to N6-succinyllysine: Lys73 and Lys106. Lys157 carries the N6-acetyllysine modification. ATP is bound by residues 235 to 243 (TSGTSGYPK), 374 to 379 (EGYGQT), Asp461, Arg476, and Lys572.

Belongs to the ATP-dependent AMP-binding enzyme family. Mg(2+) is required as a cofactor. The cofactor is Mn(2+).

The protein resides in the mitochondrion. Its subcellular location is the mitochondrion matrix. It catalyses the reaction a medium-chain fatty acid + ATP + CoA = a medium-chain fatty acyl-CoA + AMP + diphosphate. It carries out the reaction propanoate + ATP + CoA = propanoyl-CoA + AMP + diphosphate. The catalysed reaction is butanoate + ATP + CoA = butanoyl-CoA + AMP + diphosphate. The enzyme catalyses 2-methylpropanoate + ATP + CoA = 2-methylpropanoyl-CoA + AMP + diphosphate. It catalyses the reaction 2-methylbutanoate + ATP + CoA = 2-methylbutanoyl-CoA + AMP + diphosphate. It carries out the reaction octanoate + ATP + CoA = octanoyl-CoA + AMP + diphosphate. Its function is as follows. Catalyzes the activation of fatty acids by CoA to produce an acyl-CoA, the first step in fatty acid metabolism. Capable of activating medium-chain fatty acids with a preference for isobutyrate among fatty acids with 2-6 carbon atoms. The sequence is that of Acyl-coenzyme A synthetase ACSM3, mitochondrial (ACSM3) from Pongo abelii (Sumatran orangutan).